Here is a 207-residue protein sequence, read N- to C-terminus: Guanylate kinase (207 aa).

The Guanylate kinase-like domain occupies 4–184 (GTLYIVSAPS…ALSDLKTIIR (181 aa)). 11 to 18 (APSGAGKS) lines the ATP pocket.

This sequence belongs to the guanylate kinase family.

The protein resides in the cytoplasm. The enzyme catalyses GMP + ATP = GDP + ADP. It catalyses the reaction dZMP + ATP = dZDP + ADP. The protein operates within purine metabolism. In terms of biological role, essential for recycling GMP and indirectly, cGMP. Its function is as follows. (Microbial infection) Catalyzes the phosphorylation of dZMP to dZDP, when the bacterium is infected by a phage that produces the substrate for the synthesis of dZTP (2- amino-2'-deoxyadenosine 5'-triphosphate), which is then used by the phage as a DNA polymerase substrate. The protein is Guanylate kinase of Salmonella choleraesuis (strain SC-B67).